We begin with the raw amino-acid sequence, 344 residues long: tRNA N6-adenosine threonylcarbamoyltransferase (344 aa).

Fe cation-binding residues include H113 and H117. Substrate-binding positions include 135–139 (LVSGG), D169, G182, D186, and N278. D306 provides a ligand contact to Fe cation. A disordered region spans residues 325 to 344 (ESPISVGTDPSLSVETPQVF). Polar residues predominate over residues 326 to 344 (SPISVGTDPSLSVETPQVF).

The protein belongs to the KAE1 / TsaD family. Fe(2+) is required as a cofactor.

Its subcellular location is the cytoplasm. The catalysed reaction is L-threonylcarbamoyladenylate + adenosine(37) in tRNA = N(6)-L-threonylcarbamoyladenosine(37) in tRNA + AMP + H(+). Functionally, required for the formation of a threonylcarbamoyl group on adenosine at position 37 (t(6)A37) in tRNAs that read codons beginning with adenine. Is involved in the transfer of the threonylcarbamoyl moiety of threonylcarbamoyl-AMP (TC-AMP) to the N6 group of A37, together with TsaE and TsaB. TsaD likely plays a direct catalytic role in this reaction. The polypeptide is tRNA N6-adenosine threonylcarbamoyltransferase (Corynebacterium glutamicum (strain R)).